Here is a 190-residue protein sequence, read N- to C-terminus: Peptidyl-tRNA hydrolase (190 aa).

Residue tyrosine 14 participates in tRNA binding. Histidine 19 serves as the catalytic Proton acceptor. TRNA is bound by residues tyrosine 64, asparagine 66, and asparagine 112.

Belongs to the PTH family. As to quaternary structure, monomer.

The protein resides in the cytoplasm. It catalyses the reaction an N-acyl-L-alpha-aminoacyl-tRNA + H2O = an N-acyl-L-amino acid + a tRNA + H(+). Functionally, hydrolyzes ribosome-free peptidyl-tRNAs (with 1 or more amino acids incorporated), which drop off the ribosome during protein synthesis, or as a result of ribosome stalling. In terms of biological role, catalyzes the release of premature peptidyl moieties from peptidyl-tRNA molecules trapped in stalled 50S ribosomal subunits, and thus maintains levels of free tRNAs and 50S ribosomes. This is Peptidyl-tRNA hydrolase from Chlorobaculum parvum (strain DSM 263 / NCIMB 8327) (Chlorobium vibrioforme subsp. thiosulfatophilum).